We begin with the raw amino-acid sequence, 359 residues long: MAQPKRFQINAKHYFLTFPKCSLSKEEALEQLLQLQTPTNKKYIKICRELHEDGQPHLHMLIQFEGKFNCKNNRFFDLVSPTRSAHFHPNIQGAKSSSDVKSYIDKDGDVLEWGTFQIDGRSARGGQQTANDAYAKAINAGRKSEALDVIKELAPRDYILHFHNINSNLNMVFQVPPAPYVSPFLSSSFDQVPDELEHWVSENVMDVAARPWRPVSIVIEGDSRTGKTMWARSLGPHNYLCGHLDLSQKVYSNNAWYNVIDDVDPHYLKHFKEFMGSQRDWQSNTKYGKPIQIKGGIPTIFLCNPGPQSSFKEYLDEEKNQTLKNWAIKNAIFVTIHQPLFTNTNQDPTPHRQEETSEA.

The CRESS-DNA virus Rep endonuclease domain maps to 8 to 116 (QINAKHYFLT…DGDVLEWGTF (109 aa)). The RCR-1 motif lies at 15–18 (FLTF). 3 residues coordinate a divalent metal cation: Glu-49, His-57, and His-59. Residues 57-59 (HLH) carry the RCR-2 motif. Catalysis depends on Tyr-103, which acts as the For DNA cleavage activity. Residues 103 to 106 (YIDK) carry the RCR-3 motif. Asp-107 provides a ligand contact to a divalent metal cation. The interval 143 to 153 (KSEALDVIKEL) is binding to RBR1. Residues 156 to 176 (RDYILHFHNINSNLNMVFQVP) form an oligomerization region. An ATP-binding site is contributed by 221–228 (GDSRTGKT).

This sequence belongs to the geminiviridae Rep protein family. In terms of assembly, homooligomer. Interacts with the replication enhancer protein (REn). Interacts with host retinoblastoma-related protein 1 (RBR1), and may thereby induce the transcription of host replicative enzymes even if the cell is not dividing anymore. Interacts with host PCNA. Interacts with host SCE1 protein. Mg(2+) is required as a cofactor. Mn(2+) serves as cofactor.

It is found in the host nucleus. Functionally, essential for the replication of viral ssDNA. The closed circular ssDNA genome is first converted to a superhelical dsDNA. Rep binds a specific region at the genome origin of replication. It introduces an endonucleolytic nick within the conserved sequence 5'-TAATATTAC-3' in the intergenic region of the genome present in all geminiviruses, thereby initiating the rolling circle replication (RCR). Following cleavage, binds covalently to the 5'-phosphate of DNA as a tyrosyl ester. The cleavage gives rise to a free 3'-OH that serves as a primer for the cellular DNA polymerase. The polymerase synthesizes the (+) strand DNA by rolling circle mechanism. After one round of replication, a Rep-catalyzed nucleotidyl transfer reaction releases a circular single-stranded virus genome, thereby terminating the replication. Displays origin-specific DNA cleavage, nucleotidyl transferase, ATPase and helicase activities. The chain is Replication-associated protein from Solanum lycopersicum (Tomato).